Reading from the N-terminus, the 79-residue chain is UPF0180 protein BCE_1513 (79 aa).

The protein belongs to the UPF0180 family.

The polypeptide is UPF0180 protein BCE_1513 (Bacillus cereus (strain ATCC 10987 / NRS 248)).